We begin with the raw amino-acid sequence, 538 residues long: MGGEADSRQPLTAEGVAVAVNVRCSNGTKFSVTTSLDSTVESFKELIAQNSDVPANQQRLIYKGRILKDDQTLLSYGLQADHTVHMVRGFVPSSPSAPAANAGNQTTAPQAVGSNDSSNLGGGESLFPGLGFNPLGGGNAMAGLFGSGLPDLEQAQQQLAQNPNMIREMMNTPAIQNLMNNPEFMRSMIMNNPQMRELVDRNPELGHVLNDPSILRQTLEAARNPELMREMMRNTDRAMSNIESMPEGFNMLRRMYENVQEPLMNATTMSENAGNNTSSNPFAALLGNQGVTTQGSDTSNNISAPNAETGTPNANPLPNPWGATAGQTTAPGRTNAGLGGLGGLGGLGGLGMLGADSPLGATPDASQLSQILQNPAMSQMMQSVLSNPQYMNQLMSLNPQLRSMLDMNPQLREMMQNPDFLRQFSSPEMMQQMMSLQQSLFSQNRNTAGQDPTQTGAATGTANNGGLDLLMNMFGSLGAGGLSGTNQPNVPPEERFATQLQQLQEMGFYDRAENIRALLATNGNVNAAVERLLGSIGQ.

Residues 18–93 enclose the Ubiquitin-like domain; sequence VAVNVRCSNG…VHMVRGFVPS (76 aa). The segment at 95-120 is disordered; it reads PSAPAANAGNQTTAPQAVGSNDSSNL. The segment covering 102-119 has biased composition (polar residues); that stretch reads AGNQTTAPQAVGSNDSSN. STI1 domains lie at 138-179 and 192-231; these read GNAM…QNLM and NPQM…MREM. Positions 289–316 are disordered; it reads QGVTTQGSDTSNNISAPNAETGTPNANP. 2 consecutive STI1 domains span residues 357–394 and 398–433; these read SPLG…MNQL and NPQL…MQQM. The UBA domain maps to 491-535; the sequence is PPEERFATQLQQLQEMGFYDRAENIRALLATNGNVNAAVERLLGS.

In terms of assembly, interacts with 'Lys-48'-linked polyubiquitin chains via its UBA domain. Interacts with RPN10 and RPN13. Interacts with PEX2 and PEX12. Ubiquitous with a strong expression level in inflorescence.

It localises to the nucleus. Its subcellular location is the cytoplasm. Its function is as follows. Binds and presumably selects ubiquitin-conjugates for destruction. Prefers multiubiquitin chains rather than single ubiquitins, with a binding affinity for 'Lys-48'-linked ubiquitin chains. Acts as a ubiquitin receptor that associates with the 26S proteasomal docking subunit RPN10 for the indirect recognition of ubiquitinated substrates of ubiquitin/26S proteasome-mediated proteolysis (UPP). This chain is Ubiquitin domain-containing protein DSK2a (DSK2A), found in Arabidopsis thaliana (Mouse-ear cress).